The primary structure comprises 288 residues: 2-dehydro-3-deoxyphosphooctonate aldolase (288 aa).

This sequence belongs to the KdsA family.

The protein resides in the cytoplasm. It carries out the reaction D-arabinose 5-phosphate + phosphoenolpyruvate + H2O = 3-deoxy-alpha-D-manno-2-octulosonate-8-phosphate + phosphate. The protein operates within carbohydrate biosynthesis; 3-deoxy-D-manno-octulosonate biosynthesis; 3-deoxy-D-manno-octulosonate from D-ribulose 5-phosphate: step 2/3. Its pathway is bacterial outer membrane biogenesis; lipopolysaccharide biosynthesis. This is 2-dehydro-3-deoxyphosphooctonate aldolase from Bdellovibrio bacteriovorus (strain ATCC 15356 / DSM 50701 / NCIMB 9529 / HD100).